The primary structure comprises 190 residues: DNA-binding transcriptional repressor TetR (190 aa).

An HTH tetR-type domain is found at glutamate 6–phenylalanine 66. The H-T-H motif DNA-binding region spans serine 29 to tryptophan 48.

As to quaternary structure, homodimer.

Functionally, binds to its own palindromic promoter and represses transcription of its operon; addition of tetracycline or doxycycline (but not tigecycline) interferes with DNA binding. Addition of TetX to the DNA-TetR-antibiotic complex restores DNA binding. This chain is DNA-binding transcriptional repressor TetR, found in Mycobacteroides abscessus (strain ATCC 19977 / DSM 44196 / CCUG 20993 / CIP 104536 / JCM 13569 / NCTC 13031 / TMC 1543 / L948) (Mycobacterium abscessus).